The sequence spans 132 residues: Phosphoribosyl-AMP cyclohydrolase (132 aa).

Asp-86 is a Mg(2+) binding site. Cys-87 lines the Zn(2+) pocket. Mg(2+) is bound by residues Asp-88 and Asp-90. Zn(2+)-binding residues include Cys-103 and Cys-110.

This sequence belongs to the PRA-CH family. Homodimer. The cofactor is Mg(2+). Zn(2+) is required as a cofactor.

It is found in the cytoplasm. It catalyses the reaction 1-(5-phospho-beta-D-ribosyl)-5'-AMP + H2O = 1-(5-phospho-beta-D-ribosyl)-5-[(5-phospho-beta-D-ribosylamino)methylideneamino]imidazole-4-carboxamide. The protein operates within amino-acid biosynthesis; L-histidine biosynthesis; L-histidine from 5-phospho-alpha-D-ribose 1-diphosphate: step 3/9. In terms of biological role, catalyzes the hydrolysis of the adenine ring of phosphoribosyl-AMP. The sequence is that of Phosphoribosyl-AMP cyclohydrolase from Clavibacter michiganensis subsp. michiganensis (strain NCPPB 382).